Here is a 511-residue protein sequence, read N- to C-terminus: Voltage-gated potassium channel KCNC1 (511 aa).

Residues 1 to 190 (MGQGDESERI…EDPYSSRYAR (190 aa)) are Cytoplasmic-facing. Ser-44 is subject to Phosphoserine. 4 residues coordinate Zn(2+): His-77, Cys-83, Cys-104, and Cys-105. A disordered region spans residues 121 to 147 (SFGGAPLDNSADDADADGPGDSGDGED). Phosphoserine is present on residues Ser-130, Ser-142, Ser-158, and Ser-160. Acidic residues predominate over residues 130–147 (SADDADADGPGDSGDGED). Residues 191–209 (YVAFASLFFILVSITTFCL) form a helical membrane-spanning segment. N-linked (GlcNAc...) asparagine glycosylation is found at Asn-220 and Asn-229. The chain crosses the membrane as a helical span at residues 248–267 (IEGVCVVWFTFEFLMRVVFC). Topologically, residues 268–276 (PNKVEFIKN) are cytoplasmic. Residues 277–295 (SLNIIDFVAILPFYLEVGL) form a helical membrane-spanning segment. The chain crosses the membrane as a helical; Voltage-sensor span at residues 309–331 (FLRVVRFVRILRIFKLTRHFVGL). Over 332 to 344 (RVLGHTLRASTNE) the chain is Cytoplasmic. A helical membrane pass occupies residues 345–366 (FLLLIIFLALGVLIFATMIYYA). K(+)-binding residues include Thr-400, Leu-401, Gly-402, and Tyr-403. A Selectivity filter motif is present at residues 400–405 (TLGYGD). The helical transmembrane segment at 415 to 436 (LVGALCALAGVLTIAMPVPVIV) threads the bilayer. Residues 437–511 (NNFGMYYSLA…GRKPLRGMSI (75 aa)) are Cytoplasmic-facing. Ser-474 carries the phosphoserine modification. Residue Thr-483 is modified to Phosphothreonine.

It belongs to the potassium channel family. C (Shaw) (TC 1.A.1.2) subfamily. Kv3.1/KCNC1 sub-subfamily. As to quaternary structure, homotetramer. Homomultimer. Heteromultimer with KCNG3, KCNG4 and KCNV2. Heteromultimer with KCNC2. Heterotetramer with KCNC3. Interacts with the ancillary subunits KCNE1 and KCNE2; the interaction modulates channel activity. In terms of processing, N-glycosylated; contains sialylated glycans. Detected in cerebellum. Detected in brain (at protein level). Detected in brain.

It is found in the cell membrane. The protein resides in the cell projection. Its subcellular location is the axon. The protein localises to the presynaptic cell membrane. It catalyses the reaction K(+)(in) = K(+)(out). Functionally, voltage-gated potassium channel that opens in response to the voltage difference across the membrane and through which potassium ions pass in accordance with their electrochemical gradient. The mechanism is time-dependent and inactivation is slow. Plays an important role in the rapid repolarization of fast-firing brain neurons. Can form functional homotetrameric channels and heterotetrameric channels that contain variable proportions of KCNC2, and possibly other family members as well. Contributes to fire sustained trains of very brief action potentials at high frequency in pallidal neurons. The polypeptide is Voltage-gated potassium channel KCNC1 (Mus musculus (Mouse)).